Here is a 677-residue protein sequence, read N- to C-terminus: MGHNDSVETMDEISNPNNILLPHDGTGLDATGISGSQEPYGMVDVLNPDSLKDDSNVDEPLIEDIVNPSLDPEGVVSAEPSNEVGTPLLQQPISLDHVITRPASAGGVYSIGNSSTSSAAKLSDGDLTNATDPLLNNAHGHGQPSSESQSHSNGYHKQGQSQQPLLSLNKRKLLAKAHVDKHHSKKKLSTTRARPAFVNKLWSMVNDKSNEKFIHWSTSGESIVVPNRERFVQEVLPKYFKHSNFASFVRQLNMYGWHKVQDVKSGSMLSNNDSRWEFENENFKRGKEYLLENIVRQKSNTNILGGTTNAEVDIHILLNELETVKYNQLAIAEDLKRITKDNEMLWKENMMARERHQSQQQVLEKLLRFLSSVFGPNSAKTIGNGFQPDLIHELSDMQVNHMSNNNHNNTGNINPNAYHNETDDPMANVFGPLTPTDQGKVPLQDYKLRPRLLLKNRSMSSSSSSNLNQRQSPQNRIVGQSPPPQQQQQQQQQQGQPQGQQFSYPIQGGNQMMNQLGSPIGTQVGSPVGSQYGNQYGNQYSNQFGNQLQQQTSRPALHHGSNGEIRELTPSIVSSDSPDPAFFQDLQNNIDKQEESIQEIQDWITKLNPGPGEDGNTPIFPELNMPSYFANTGGSGQSEQPSDYGDSQIEELRNSRLHEPDRSFEEKNNGQKRRRAA.

2 disordered regions span residues 1–56 (MGHN…DDSN) and 115–164 (STSS…SQQP). Polar residues-rich tracts occupy residues 115 to 131 (STSS…TNAT) and 143 to 164 (QPSS…SQQP). The DNA-binding element occupies 193–297 (ARPAFVNKLW…EYLLENIVRQ (105 aa)). The segment at 320–373 (ELETVKYNQLAIAEDLKRITKDNEMLWKENMMARERHQSQQQVLEKLLRFLSSV) is involved in trimerization. 2 stretches are compositionally biased toward low complexity: residues 400 to 416 (NHMS…INPN) and 457 to 501 (RSMS…QGQQ). 3 disordered regions span residues 400–444 (NHMS…VPLQ), 457–541 (RSMS…NQYS), and 606–677 (KLNP…RRAA). Residues 466–677 (NLNQRQSPQN…NNGQKRRRAA (212 aa)) form an activatory region. Composition is skewed to polar residues over residues 502-541 (FSYP…NQYS) and 629-641 (FANT…SEQP). Basic and acidic residues predominate over residues 650 to 669 (EELRNSRLHEPDRSFEEKNN).

This sequence belongs to the HSF family. As to quaternary structure, homotrimer. Homotrimerization increases the affinity of HSF1 to DNA. Post-translationally, exhibits temperature-dependent phosphorylation.

Its subcellular location is the nucleus. Its function is as follows. DNA-binding transcription factor that specifically binds heat shock promoter elements (HSE) and activates transcription. The chain is Heat shock transcription factor from Kluyveromyces lactis (strain ATCC 8585 / CBS 2359 / DSM 70799 / NBRC 1267 / NRRL Y-1140 / WM37) (Yeast).